The following is a 121-amino-acid chain: Large ribosomal subunit protein bL20 (121 aa).

It belongs to the bacterial ribosomal protein bL20 family.

Its function is as follows. Binds directly to 23S ribosomal RNA and is necessary for the in vitro assembly process of the 50S ribosomal subunit. It is not involved in the protein synthesizing functions of that subunit. The sequence is that of Large ribosomal subunit protein bL20 from Francisella tularensis subsp. mediasiatica (strain FSC147).